The sequence spans 561 residues: DNA ligase B (561 aa).

The N6-AMP-lysine intermediate role is filled by lysine 125.

Belongs to the NAD-dependent DNA ligase family. LigB subfamily.

The catalysed reaction is NAD(+) + (deoxyribonucleotide)n-3'-hydroxyl + 5'-phospho-(deoxyribonucleotide)m = (deoxyribonucleotide)n+m + AMP + beta-nicotinamide D-nucleotide.. Catalyzes the formation of phosphodiester linkages between 5'-phosphoryl and 3'-hydroxyl groups in double-stranded DNA using NAD as a coenzyme and as the energy source for the reaction. The polypeptide is DNA ligase B (Salmonella agona (strain SL483)).